Consider the following 447-residue polypeptide: Gamma-glutamyl phosphate reductase (447 aa).

This sequence belongs to the gamma-glutamyl phosphate reductase family.

It localises to the cytoplasm. It carries out the reaction L-glutamate 5-semialdehyde + phosphate + NADP(+) = L-glutamyl 5-phosphate + NADPH + H(+). Its pathway is amino-acid biosynthesis; L-proline biosynthesis; L-glutamate 5-semialdehyde from L-glutamate: step 2/2. In terms of biological role, catalyzes the NADPH-dependent reduction of L-glutamate 5-phosphate into L-glutamate 5-semialdehyde and phosphate. The product spontaneously undergoes cyclization to form 1-pyrroline-5-carboxylate. This is Gamma-glutamyl phosphate reductase from Methanosarcina barkeri (strain Fusaro / DSM 804).